The primary structure comprises 188 residues: V-type proton ATPase subunit E (188 aa).

It belongs to the V-ATPase E subunit family.

Functionally, produces ATP from ADP in the presence of a proton gradient across the membrane. The polypeptide is V-type proton ATPase subunit E (Dictyoglomus turgidum (strain DSM 6724 / Z-1310)).